A 633-amino-acid chain; its full sequence is Membrane protein insertase YidC (633 aa).

6 consecutive transmembrane segments (helical) span residues 3–23 (KNTL…SWFN), 377–397 (FIHN…IILF), 453–473 (LPML…PSAI), 499–519 (IPII…LMTI), 541–561 (GMKA…NQYA), and 562–582 (SGLT…TLIF). Residues 612-633 (LEEAQRAQQETLRKQQEAKKKR) form a disordered region.

The protein belongs to the OXA1/ALB3/YidC family. Type 1 subfamily. Interacts with the Sec translocase complex via SecD. Specifically interacts with transmembrane segments of nascent integral membrane proteins during membrane integration.

The protein localises to the cell inner membrane. Its function is as follows. Required for the insertion and/or proper folding and/or complex formation of integral membrane proteins into the membrane. Involved in integration of membrane proteins that insert both dependently and independently of the Sec translocase complex, as well as at least some lipoproteins. Aids folding of multispanning membrane proteins. The polypeptide is Membrane protein insertase YidC (Parabacteroides distasonis (strain ATCC 8503 / DSM 20701 / CIP 104284 / JCM 5825 / NCTC 11152)).